A 158-amino-acid chain; its full sequence is Transcriptional repressor NrdR (158 aa).

The disordered stretch occupies residues 1-20 (MRCPYCQSEDTQVKDSRPAE). Residues 3 to 34 (CPYCQSEDTQVKDSRPAEDGAVIRRRRVCSVC) fold into a zinc finger. Over residues 11–20 (TQVKDSRPAE) the composition is skewed to basic and acidic residues. Residues 49–139 (LMVVKKSGRR…VYRNFSKAVD (91 aa)) enclose the ATP-cone domain.

It belongs to the NrdR family. The cofactor is Zn(2+).

Its function is as follows. Negatively regulates transcription of bacterial ribonucleotide reductase nrd genes and operons by binding to NrdR-boxes. This chain is Transcriptional repressor NrdR, found in Brucella anthropi (strain ATCC 49188 / DSM 6882 / CCUG 24695 / JCM 21032 / LMG 3331 / NBRC 15819 / NCTC 12168 / Alc 37) (Ochrobactrum anthropi).